The following is a 509-amino-acid chain: Photosystem II CP47 reaction center protein (509 aa).

6 helical membrane passes run 21–36, 101–115, 140–156, 203–218, 237–252, and 457–472; these read SVHIMHTALVAGWAGS, IVFSGLCFLAAIWHW, GIHLFLAGVGCFGFGAF, IAAGTLGILAGLFHLS, VLSSSIAAVFFAAFVV, and SFALLFFFGHIWHGAR.

The protein belongs to the PsbB/PsbC family. PsbB subfamily. In terms of assembly, PSII is composed of 1 copy each of membrane proteins PsbA, PsbB, PsbC, PsbD, PsbE, PsbF, PsbH, PsbI, PsbJ, PsbK, PsbL, PsbM, PsbT, PsbX, PsbY, PsbZ, Psb30/Ycf12, at least 3 peripheral proteins of the oxygen-evolving complex and a large number of cofactors. It forms dimeric complexes. Binds multiple chlorophylls. PSII binds additional chlorophylls, carotenoids and specific lipids. serves as cofactor.

It is found in the plastid. The protein localises to the chloroplast thylakoid membrane. Functionally, one of the components of the core complex of photosystem II (PSII). It binds chlorophyll and helps catalyze the primary light-induced photochemical processes of PSII. PSII is a light-driven water:plastoquinone oxidoreductase, using light energy to abstract electrons from H(2)O, generating O(2) and a proton gradient subsequently used for ATP formation. The protein is Photosystem II CP47 reaction center protein of Cicer arietinum (Chickpea).